The sequence spans 78 residues: Beta-defensin 105A (78 aa).

The signal sequence occupies residues 1–27 (MALIKKTFFFLFAMFFILVQLSSGCQA). Cystine bridges form between C43–C74, C53–C67, and C57–C73.

This sequence belongs to the beta-defensin family.

Its subcellular location is the secreted. In terms of biological role, has antimicrobial activity. The chain is Beta-defensin 105A (DEFB105A) from Pan troglodytes (Chimpanzee).